Here is a 125-residue protein sequence, read N- to C-terminus: MNDTPRVCVQVQSAYIESQSAPEEERYVFAYAVTIRNVGRIAVQLIGRYWLITNGNGRETEVQGEGVVGEQPHIEPGGEYQYTSGAVLETPIGTMQGHYQMIDADSENFRVEIPVFRLAIATHIH.

The 125-residue stretch at 1–125 (MNDTPRVCVQ…FRLAIATHIH (125 aa)) folds into the ApaG domain.

This Erwinia tasmaniensis (strain DSM 17950 / CFBP 7177 / CIP 109463 / NCPPB 4357 / Et1/99) protein is Protein ApaG.